We begin with the raw amino-acid sequence, 520 residues long: Bifunctional purine biosynthesis protein PurH (520 aa).

Residues 1–147 (MAKIGRALIS…KNNRDVTVVV (147 aa)) enclose the MGS-like domain.

This sequence belongs to the PurH family.

It carries out the reaction (6R)-10-formyltetrahydrofolate + 5-amino-1-(5-phospho-beta-D-ribosyl)imidazole-4-carboxamide = 5-formamido-1-(5-phospho-D-ribosyl)imidazole-4-carboxamide + (6S)-5,6,7,8-tetrahydrofolate. It catalyses the reaction IMP + H2O = 5-formamido-1-(5-phospho-D-ribosyl)imidazole-4-carboxamide. It functions in the pathway purine metabolism; IMP biosynthesis via de novo pathway; 5-formamido-1-(5-phospho-D-ribosyl)imidazole-4-carboxamide from 5-amino-1-(5-phospho-D-ribosyl)imidazole-4-carboxamide (10-formyl THF route): step 1/1. The protein operates within purine metabolism; IMP biosynthesis via de novo pathway; IMP from 5-formamido-1-(5-phospho-D-ribosyl)imidazole-4-carboxamide: step 1/1. This chain is Bifunctional purine biosynthesis protein PurH, found in Citrifermentans bemidjiense (strain ATCC BAA-1014 / DSM 16622 / JCM 12645 / Bem) (Geobacter bemidjiensis).